The chain runs to 567 residues: Sporulation-specific protein 5 (567 aa).

Over residues 1 to 18 the composition is skewed to polar residues; the sequence is MNGIITPQKQKQLMSSPS. 2 disordered regions span residues 1–39 and 52–76; these read MNGIITPQKQKQLMSSPSRDPLSTTELSTPTSQTTVDVN and ILLTPGTSPNATPGSSELGLSKKPN. Residues 21–35 show a composition bias toward low complexity; that stretch reads PLSTTELSTPTSQTT. Polar residues predominate over residues 56–66; that stretch reads PGTSPNATPGS. RRM domains are found at residues 296 to 380 and 384 to 462; these read RNVY…SLQD and TNLY…FADS.

It is found in the cytoplasm. Functionally, RNA-binding protein which plays a role in sporulation. Regulates the progression of meiosis I and may function in the vicinity of the Mei2 dot. The protein is Sporulation-specific protein 5 (spo5) of Schizosaccharomyces pombe (strain 972 / ATCC 24843) (Fission yeast).